The primary structure comprises 168 residues: 2-C-methyl-D-erythritol 2,4-cyclodiphosphate synthase (168 aa).

2 residues coordinate a divalent metal cation: Asp-11 and His-13. 4-CDP-2-C-methyl-D-erythritol 2-phosphate-binding positions include 11–13 (DVH) and 41–42 (HS). Position 49 (His-49) interacts with a divalent metal cation. Residues 63–65 (DIG), 68–72 (FPDTD), 139–142 (TTTE), Phe-146, and Arg-149 each bind 4-CDP-2-C-methyl-D-erythritol 2-phosphate.

This sequence belongs to the IspF family. As to quaternary structure, homotrimer. A divalent metal cation is required as a cofactor.

The enzyme catalyses 4-CDP-2-C-methyl-D-erythritol 2-phosphate = 2-C-methyl-D-erythritol 2,4-cyclic diphosphate + CMP. The protein operates within isoprenoid biosynthesis; isopentenyl diphosphate biosynthesis via DXP pathway; isopentenyl diphosphate from 1-deoxy-D-xylulose 5-phosphate: step 4/6. Involved in the biosynthesis of isopentenyl diphosphate (IPP) and dimethylallyl diphosphate (DMAPP), two major building blocks of isoprenoid compounds. Catalyzes the conversion of 4-diphosphocytidyl-2-C-methyl-D-erythritol 2-phosphate (CDP-ME2P) to 2-C-methyl-D-erythritol 2,4-cyclodiphosphate (ME-CPP) with a corresponding release of cytidine 5-monophosphate (CMP). In Psychrobacter arcticus (strain DSM 17307 / VKM B-2377 / 273-4), this protein is 2-C-methyl-D-erythritol 2,4-cyclodiphosphate synthase.